Consider the following 883-residue polypeptide: Phosphoenolpyruvate carboxylase (883 aa).

Catalysis depends on residues His138 and Lys546.

The protein belongs to the PEPCase type 1 family. Homotetramer. Mg(2+) serves as cofactor.

It carries out the reaction oxaloacetate + phosphate = phosphoenolpyruvate + hydrogencarbonate. The enzyme has distinct binding sites for each of the allosteric effectors such as acetyl-CoA, fructose 1,6-bisphosphate, guanosine 3'-diphosphate 5'-diphosphate, long chain fatty acids, and L-aspartate. In terms of biological role, forms oxaloacetate, a four-carbon dicarboxylic acid source for the tricarboxylic acid cycle. In Escherichia coli O157:H7, this protein is Phosphoenolpyruvate carboxylase.